A 267-amino-acid chain; its full sequence is Large ribosomal subunit protein uL4 (267 aa).

Belongs to the universal ribosomal protein uL4 family. In terms of assembly, part of the 50S ribosomal subunit.

One of the primary rRNA binding proteins, this protein initially binds near the 5'-end of the 23S rRNA. It is important during the early stages of 50S assembly. It makes multiple contacts with different domains of the 23S rRNA in the assembled 50S subunit and ribosome. In terms of biological role, forms part of the polypeptide exit tunnel. This Saccharolobus islandicus (strain Y.N.15.51 / Yellowstone #2) (Sulfolobus islandicus) protein is Large ribosomal subunit protein uL4.